The chain runs to 101 residues: Small ribosomal subunit protein uS14 (101 aa).

Belongs to the universal ribosomal protein uS14 family. As to quaternary structure, part of the 30S ribosomal subunit. Contacts proteins S3 and S10.

Functionally, binds 16S rRNA, required for the assembly of 30S particles and may also be responsible for determining the conformation of the 16S rRNA at the A site. The polypeptide is Small ribosomal subunit protein uS14 (Ruegeria sp. (strain TM1040) (Silicibacter sp.)).